The sequence spans 1584 residues: Pentafunctional AROM polypeptide (1584 aa).

The tract at residues 1-384 is 3-dehydroquinate synthase; the sequence is MSQDTDVVSV…YEKHATVVSD (384 aa). Residues 46–48, 83–86, 114–116, and Asp-119 each bind NAD(+); these read DTN, ETSK, and GGV. Arg-130 is a binding site for 7-phospho-2-dehydro-3-deoxy-D-arabino-heptonate. 139-140 contributes to the NAD(+) binding site; the sequence is TT. The 7-phospho-2-dehydro-3-deoxy-D-arabino-heptonate site is built by Asp-146 and Lys-152. Lys-161 is an NAD(+) binding site. Asn-162 contributes to the 7-phospho-2-dehydro-3-deoxy-D-arabino-heptonate binding site. NAD(+)-binding positions include 179–182 and Asn-190; that span reads FLET. A Zn(2+)-binding site is contributed by Glu-194. 7-phospho-2-dehydro-3-deoxy-D-arabino-heptonate is bound by residues 194–197 and Lys-250; that span reads EVIK. Glu-260 acts as the Proton acceptor; for 3-dehydroquinate synthase activity in catalysis. 7-phospho-2-dehydro-3-deoxy-D-arabino-heptonate-binding positions include 264–268 and His-271; that span reads RNLLN. Zn(2+) is bound at residue His-271. His-275 acts as the Proton acceptor; for 3-dehydroquinate synthase activity in catalysis. Residues His-287 and Lys-356 each contribute to the 7-phospho-2-dehydro-3-deoxy-D-arabino-heptonate site. His-287 contacts Zn(2+). Residues 397–843 form an EPSP synthase region; sequence VSPFDNSVSD…WDVLRNSFKI (447 aa). The For EPSP synthase activity role is filled by Cys-825. Residues 863–1058 form a shikimate kinase region; it reads RASVILIGMR…IQKPHSFFLS (196 aa). An ATP-binding site is contributed by 870–877; that stretch reads GMRGAGKT. The tract at residues 1059-1280 is 3-dehydroquinase; it reads LTFPNINDAI…AAPGQLSVRQ (222 aa). The active-site Proton acceptor; for 3-dehydroquinate dehydratase activity is His-1182. The active-site Schiff-base intermediate with substrate; for 3-dehydroquinate dehydratase activity is the Lys-1211. Positions 1293-1584 are shikimate dehydrogenase; it reads PKKFYLFGTP…YMVLCAKEHN (292 aa).

This sequence in the N-terminal section; belongs to the sugar phosphate cyclases superfamily. Dehydroquinate synthase family. It in the 2nd section; belongs to the EPSP synthase family. The protein in the 3rd section; belongs to the shikimate kinase family. In the 4th section; belongs to the type-I 3-dehydroquinase family. This sequence in the C-terminal section; belongs to the shikimate dehydrogenase family. In terms of assembly, homodimer. Requires Zn(2+) as cofactor.

The protein resides in the cytoplasm. It carries out the reaction 7-phospho-2-dehydro-3-deoxy-D-arabino-heptonate = 3-dehydroquinate + phosphate. The enzyme catalyses 3-dehydroquinate = 3-dehydroshikimate + H2O. It catalyses the reaction shikimate + NADP(+) = 3-dehydroshikimate + NADPH + H(+). The catalysed reaction is shikimate + ATP = 3-phosphoshikimate + ADP + H(+). It carries out the reaction 3-phosphoshikimate + phosphoenolpyruvate = 5-O-(1-carboxyvinyl)-3-phosphoshikimate + phosphate. Its pathway is metabolic intermediate biosynthesis; chorismate biosynthesis; chorismate from D-erythrose 4-phosphate and phosphoenolpyruvate: step 2/7. It functions in the pathway metabolic intermediate biosynthesis; chorismate biosynthesis; chorismate from D-erythrose 4-phosphate and phosphoenolpyruvate: step 3/7. The protein operates within metabolic intermediate biosynthesis; chorismate biosynthesis; chorismate from D-erythrose 4-phosphate and phosphoenolpyruvate: step 4/7. It participates in metabolic intermediate biosynthesis; chorismate biosynthesis; chorismate from D-erythrose 4-phosphate and phosphoenolpyruvate: step 5/7. Its pathway is metabolic intermediate biosynthesis; chorismate biosynthesis; chorismate from D-erythrose 4-phosphate and phosphoenolpyruvate: step 6/7. In terms of biological role, the AROM polypeptide catalyzes 5 consecutive enzymatic reactions in prechorismate polyaromatic amino acid biosynthesis. In Schizosaccharomyces japonicus (strain yFS275 / FY16936) (Fission yeast), this protein is Pentafunctional AROM polypeptide.